We begin with the raw amino-acid sequence, 430 residues long: tRNA(Ile)-lysidine synthase (430 aa).

24–29 lines the ATP pocket; that stretch reads SGGLDS.

It belongs to the tRNA(Ile)-lysidine synthase family.

It localises to the cytoplasm. The enzyme catalyses cytidine(34) in tRNA(Ile2) + L-lysine + ATP = lysidine(34) in tRNA(Ile2) + AMP + diphosphate + H(+). Ligates lysine onto the cytidine present at position 34 of the AUA codon-specific tRNA(Ile) that contains the anticodon CAU, in an ATP-dependent manner. Cytidine is converted to lysidine, thus changing the amino acid specificity of the tRNA from methionine to isoleucine. The polypeptide is tRNA(Ile)-lysidine synthase (Haemophilus influenzae (strain 86-028NP)).